Reading from the N-terminus, the 116-residue chain is Putative pterin-4-alpha-carbinolamine dehydratase 1 (116 aa).

The protein belongs to the pterin-4-alpha-carbinolamine dehydratase family.

It carries out the reaction (4aS,6R)-4a-hydroxy-L-erythro-5,6,7,8-tetrahydrobiopterin = (6R)-L-erythro-6,7-dihydrobiopterin + H2O. In Cupriavidus pinatubonensis (strain JMP 134 / LMG 1197) (Cupriavidus necator (strain JMP 134)), this protein is Putative pterin-4-alpha-carbinolamine dehydratase 1.